The sequence spans 92 residues: MPRSLKKGPFVDHHLLKKVFEAQESNSKKPIKTWSRRSMIVPDMIGLTIAVHNGQQHVPVLMTEEMVGHKLGEFVVTRNYRGHAADKKAKKK.

The protein belongs to the universal ribosomal protein uS19 family.

Functionally, protein S19 forms a complex with S13 that binds strongly to the 16S ribosomal RNA. In Francisella tularensis subsp. tularensis (strain FSC 198), this protein is Small ribosomal subunit protein uS19.